We begin with the raw amino-acid sequence, 375 residues long: Anhydro-N-acetylmuramic acid kinase (375 aa).

12–19 (GTSLDGVD) is an ATP binding site.

The protein belongs to the anhydro-N-acetylmuramic acid kinase family.

It catalyses the reaction 1,6-anhydro-N-acetyl-beta-muramate + ATP + H2O = N-acetyl-D-muramate 6-phosphate + ADP + H(+). It functions in the pathway amino-sugar metabolism; 1,6-anhydro-N-acetylmuramate degradation. Its pathway is cell wall biogenesis; peptidoglycan recycling. Its function is as follows. Catalyzes the specific phosphorylation of 1,6-anhydro-N-acetylmuramic acid (anhMurNAc) with the simultaneous cleavage of the 1,6-anhydro ring, generating MurNAc-6-P. Is required for the utilization of anhMurNAc either imported from the medium or derived from its own cell wall murein, and thus plays a role in cell wall recycling. The sequence is that of Anhydro-N-acetylmuramic acid kinase from Variovorax paradoxus (strain S110).